Here is a 538-residue protein sequence, read N- to C-terminus: Phosphoenolpyruvate carboxykinase (ATP) (538 aa).

Residues arginine 64, tyrosine 205, and lysine 211 each contribute to the substrate site. Residues lysine 211, histidine 230, and 246-254 each bind ATP; that span reads GLSGTGKTT. Mn(2+)-binding residues include lysine 211 and histidine 230. Mn(2+) is bound at residue aspartate 267. ATP is bound by residues glutamate 295, arginine 331, 447-448, and threonine 453; that span reads RI. Residue arginine 331 coordinates substrate.

It belongs to the phosphoenolpyruvate carboxykinase (ATP) family. As to quaternary structure, monomer. Mn(2+) is required as a cofactor.

The protein localises to the cytoplasm. It carries out the reaction oxaloacetate + ATP = phosphoenolpyruvate + ADP + CO2. The protein operates within carbohydrate biosynthesis; gluconeogenesis. Its function is as follows. Involved in the gluconeogenesis. Catalyzes the conversion of oxaloacetate (OAA) to phosphoenolpyruvate (PEP) through direct phosphoryl transfer between the nucleoside triphosphate and OAA. This is Phosphoenolpyruvate carboxykinase (ATP) from Haemophilus influenzae (strain PittGG).